A 137-amino-acid chain; its full sequence is Small ribosomal subunit protein uS11 (137 aa).

Positions 1-10 (MPPKSRSTGP) are enriched in polar residues. Disordered regions lie at residues 1–27 (MPPK…IPHG) and 116–137 (GTIS…RRRV). Basic residues predominate over residues 12-21 (KTQKTRRRDK).

It belongs to the universal ribosomal protein uS11 family. Part of the 30S ribosomal subunit. Interacts with proteins S7 and S18. Binds to IF-3.

Its function is as follows. Located on the platform of the 30S subunit, it bridges several disparate RNA helices of the 16S rRNA. Forms part of the Shine-Dalgarno cleft in the 70S ribosome. The chain is Small ribosomal subunit protein uS11 from Rhodococcus erythropolis (strain PR4 / NBRC 100887).